The sequence spans 105 residues: MRVVKKKLLRIFTSEDESFEGKPFYKYLLERAKERGLEGATVFRAIAGYGKTKEIRKHKLFQLRSSLPVVVEIIDEEEKIKRFLEEIKGKHNGLITLEDVEVIYL.

This sequence belongs to the UPF0166 family.

This is UPF0166 protein aq_450 from Aquifex aeolicus (strain VF5).